Reading from the N-terminus, the 119-residue chain is uncharacterized protein (119 aa).

The tract at residues 64–119 (SAPLGLKEVQKKSNEGLNEVQGAADINKQKRPANSQDSSSVEGDIQNFLEKVTGKN) is disordered. Positions 95–104 (PANSQDSSSV) are enriched in polar residues.

This is an uncharacterized protein from Nostoc sp. (strain PCC 7120 / SAG 25.82 / UTEX 2576).